The primary structure comprises 210 residues: Putative polysaccharide-binding protein (210 aa).

An N-terminal signal peptide occupies residues 1–22 (MGFLKGTAAALTLLSAAAAASA). 4 CBM1 domains span residues 23-62 (CGVL…AMPG), 63-105 (MMGQ…LANK), 125-165 (CGKE…APPP), and 166-210 (KMGE…PMHP).

The chain is Putative polysaccharide-binding protein from Porphyra purpurea (Red seaweed).